The chain runs to 144 residues: RxLR effector protein PITG_03192 (144 aa).

An N-terminal signal peptide occupies residues 1–24 (MRVGFVFALLVVSVIVCFNGLTSA). A RxLR-dEER motif is present at residues 49–58 (RNLRASGEER). The N-linked (GlcNAc...) asparagine glycan is linked to Asn115. A helical membrane pass occupies residues 122-142 (FFILATLVMFPIGVWAVVTNY).

It belongs to the RxLR effector family. In terms of assembly, interacts with the C-terminal portions the ER-associated potato NAC transcription factors NTP1 and NTP2.

The protein resides in the secreted. The protein localises to the host endoplasmic reticulum membrane. Functionally, effector that is required for full virulence. Targets host NTP1 and NTP2 transcription factors and prevents their pathogen-associated molecular pattern (PAMP)-triggered re-localization from the endoplasmic reticulum into the nucleus, where they contribute to prevent disease progression by P.infestans. The sequence is that of RxLR effector protein PITG_03192 from Phytophthora infestans (strain T30-4) (Potato late blight agent).